A 668-amino-acid polypeptide reads, in one-letter code: Lebercilin-like protein (668 aa).

Positions 17-44 (SVALENNRRSAECKRSPGTGDFSRNSSA) are disordered. Residues 22–31 (NNRRSAECKR) are compositionally biased toward basic and acidic residues. Coiled coils occupy residues 148 to 259 (LHKI…EREE) and 305 to 336 (AAQT…IKNI). A disordered region spans residues 351-402 (YPKVSSTKSVQADRKSLPFTSMRHQGTQKSDVPPLTTKGKKATGNMNHKEKS). Positions 368-380 (PFTSMRHQGTQKS) are enriched in polar residues. Residues 420–440 (EDSKTKYEDLSREEKHLEVQV) are a coiled coil. 3 disordered regions span residues 495-520 (RSMQ…PLRQ), 533-581 (LHHG…FGKS), and 605-668 (SGYV…KIII). Over residues 546 to 558 (AGNTKYSHSTSKH) the composition is skewed to polar residues. 2 stretches are compositionally biased toward basic and acidic residues: residues 560–572 (SNRE…HSDS) and 621–632 (GSEEPLQSKESH). A compositionally biased stretch (polar residues) spans 633 to 660 (PPSQASASNAFGDSKVTVVNSIKPSSPT).

It belongs to the LCA5 family.

This chain is Lebercilin-like protein, found in Macaca fascicularis (Crab-eating macaque).